The sequence spans 144 residues: Universal stress protein F (144 aa).

It belongs to the universal stress protein A family. In terms of assembly, homodimer.

The sequence is that of Universal stress protein F (uspF) from Escherichia coli (strain K12).